The primary structure comprises 317 residues: Apolipoprotein E (317 aa).

The N-terminal stretch at 1 to 18 (MKVLWAALLVTFLAGCQA) is a signal peptide. O-linked (GalNAc...) threonine glycans are attached at residues threonine 26 and threonine 36. 8 consecutive repeat copies span residues 80–101 (ALMD…EQLT), 102–123 (PVAE…ARLG), 124–145 (ADME…AMLG), 146–167 (QSTE…KRLL), 168–189 (RDAD…EGAE), 190–211 (RGLS…VRAA), 212–233 (TVGS…ERLR), and 234–255 (ARME…EQVA). Positions 80–255 (ALMDETMKEL…RLDEVKEQVA (176 aa)) are 8 X 22 AA approximate tandem repeats. Residue lysine 93 is glycosylated (N-linked (Glc) (glycation) lysine). Methionine 143 is subject to Methionine sulfoxide. At serine 147 the chain carries Phosphoserine; by FAM20C. The tract at residues 158-168 (HLRKLRKRLLR) is LDL and other lipoprotein receptors binding. Residue 162 to 165 (LRKR) coordinates heparin. The interval 210–290 (AATVGSLAGQ…SWFEPLVEDM (81 aa)) is lipid-binding and lipoprotein association. Threonine 212 carries an O-linked (GalNAc...) threonine glycan. Residue 229–236 (GERLRARM) coordinates heparin. The homooligomerization stretch occupies residues 266–317 (QQIRLQAEAFQARLKSWFEPLVEDMQRQWAGLVEKVQAAVGTSAAPVPSDNH). The specificity for association with VLDL stretch occupies residues 278–290 (RLKSWFEPLVEDM). Threonine 307 carries O-linked (GalNAc...) threonine glycosylation. O-linked (GalNAc...) serine glycosylation is found at serine 308 and serine 314.

Belongs to the apolipoprotein A1/A4/E family. Homotetramer. May interact with ABCA1; functionally associated with ABCA1 in the biogenesis of HDLs. May interact with APP/A4 amyloid-beta peptide; the interaction is extremely stable in vitro but its physiological significance is unclear. May interact with MAPT. May interact with MAP2. In the cerebrospinal fluid, interacts with secreted SORL1. Interacts with PMEL; this allows the loading of PMEL luminal fragment on ILVs to induce fibril nucleation. As to quaternary structure, (Microbial infection) Interacts with hepatitis C virus (HCV) envelope glycoprotein E2; this interaction is required for HCV infectivity and production. In terms of processing, APOE exists as multiple glycosylated and sialylated glycoforms within cells and in plasma. The extent of glycosylation and sialylation are tissue and context specific. Plasma APOE undergoes desialylation and is less glycosylated and sialylated than the cellular form. Glycosylation is not required for proper expression and secretion. O-glycosylated with core 1 or possibly core 8 glycans. Thr-307 and Ser-314 are minor glycosylation sites compared to Ser-308. Glycated in plasma VLDL of normal subjects, and of hyperglycemic diabetic patients at a higher level (2-3 fold). Post-translationally, phosphorylated by FAM20C in the extracellular medium. In terms of processing, undergoes C-terminal proteolytic processing in neurons. C-terminally truncated APOE has a tendency to form neurotoxic intracellular neurofibrillary tangle-like inclusions in neurons. As to expression, produced by several tissues and cell types and mainly found associated with lipid particles in the plasma, the interstitial fluid and lymph. Mainly synthesized by liver hepatocytes. Significant quantities are also produced in brain, mainly by astrocytes and glial cells in the cerebral cortex, but also by neurons in frontal cortex and hippocampus. It is also expressed by cells of the peripheral nervous system. Also expressed by adrenal gland, testis, ovary, skin, kidney, spleen and adipose tissue and macrophages in various tissues.

The protein resides in the secreted. It localises to the extracellular space. It is found in the extracellular matrix. Its subcellular location is the extracellular vesicle. The protein localises to the endosome. The protein resides in the multivesicular body. Its function is as follows. APOE is an apolipoprotein, a protein associating with lipid particles, that mainly functions in lipoprotein-mediated lipid transport between organs via the plasma and interstitial fluids. APOE is a core component of plasma lipoproteins and is involved in their production, conversion and clearance. Apolipoproteins are amphipathic molecules that interact both with lipids of the lipoprotein particle core and the aqueous environment of the plasma. As such, APOE associates with chylomicrons, chylomicron remnants, very low density lipoproteins (VLDL) and intermediate density lipoproteins (IDL) but shows a preferential binding to high-density lipoproteins (HDL). It also binds a wide range of cellular receptors including the LDL receptor/LDLR, the LDL receptor-related proteins LRP1, LRP2 and LRP8 and the very low-density lipoprotein receptor/VLDLR that mediate the cellular uptake of the APOE-containing lipoprotein particles. Finally, APOE also has a heparin-binding activity and binds heparan-sulfate proteoglycans on the surface of cells, a property that supports the capture and the receptor-mediated uptake of APOE-containing lipoproteins by cells. A main function of APOE is to mediate lipoprotein clearance through the uptake of chylomicrons, VLDLs, and HDLs by hepatocytes. APOE is also involved in the biosynthesis by the liver of VLDLs as well as their uptake by peripheral tissues ensuring the delivery of triglycerides and energy storage in muscle, heart and adipose tissues. By participating in the lipoprotein-mediated distribution of lipids among tissues, APOE plays a critical role in plasma and tissues lipid homeostasis. APOE is also involved in two steps of reverse cholesterol transport, the HDLs-mediated transport of cholesterol from peripheral tissues to the liver, and thereby plays an important role in cholesterol homeostasis. First, it is functionally associated with ABCA1 in the biogenesis of HDLs in tissues. Second, it is enriched in circulating HDLs and mediates their uptake by hepatocytes. APOE also plays an important role in lipid transport in the central nervous system, regulating neuron survival and sprouting. APOE is also involved in innate and adaptive immune responses, controlling for instance the survival of myeloid-derived suppressor cells. Binds to the immune cell receptor LILRB4. APOE may also play a role in transcription regulation through a receptor-dependent and cholesterol-independent mechanism, that activates MAP3K12 and a non-canonical MAPK signal transduction pathway that results in enhanced AP-1-mediated transcription of APP. (Microbial infection) Through its interaction with HCV envelope glycoprotein E2, participates in the attachment of HCV to HSPGs and other receptors (LDLr, VLDLr, and SR-B1) on the cell surface and to the assembly, maturation and infectivity of HCV viral particles. This interaction is probably promoted via the up-regulation of cellular autophagy by the virus. This is Apolipoprotein E from Homo sapiens (Human).